The sequence spans 702 residues: Methionine--tRNA ligase (702 aa).

The 'HIGH' region motif lies at 23–33 (PYANGPLHLGH). Residues C154, C157, C167, and C170 each coordinate Zn(2+). The 'KMSKS' region motif lies at 341–345 (KMSKS). K344 contacts ATP. Positions 562 to 593 (LAPPPASAKQQNASMSNTAPPPTAEKPETTAP) are disordered. The segment covering 569–578 (AKQQNASMSN) has biased composition (polar residues). Residues 599–702 (DFAKLDLRIG…SSAQPGMPVR (104 aa)) enclose the tRNA-binding domain.

Belongs to the class-I aminoacyl-tRNA synthetase family. MetG type 1 subfamily. Homodimer. It depends on Zn(2+) as a cofactor.

It is found in the cytoplasm. It carries out the reaction tRNA(Met) + L-methionine + ATP = L-methionyl-tRNA(Met) + AMP + diphosphate. In terms of biological role, is required not only for elongation of protein synthesis but also for the initiation of all mRNA translation through initiator tRNA(fMet) aminoacylation. The chain is Methionine--tRNA ligase from Xylella fastidiosa (strain 9a5c).